Reading from the N-terminus, the 123-residue chain is Photosystem II extrinsic protein U (123 aa).

An N-terminal signal peptide occupies residues 1–28; that stretch reads MKTLARILVVFTLIVGLIGFFNPLPAQA.

It belongs to the PsbU family. In terms of assembly, PSII is composed of 1 copy each of membrane proteins PsbA, PsbB, PsbC, PsbD, PsbE, PsbF, PsbH, PsbI, PsbJ, PsbK, PsbL, PsbM, PsbT, PsbX, PsbY, PsbZ, Psb30/Ycf12, peripheral proteins PsbO, CyanoQ (PsbQ), PsbU, PsbV and a large number of cofactors. It forms dimeric complexes.

It localises to the cellular thylakoid membrane. In terms of biological role, one of the extrinsic, lumenal subunits of photosystem II (PSII). PSII is a light-driven water plastoquinone oxidoreductase, using light energy to abstract electrons from H(2)O, generating a proton gradient subsequently used for ATP formation. The extrinsic proteins stabilize the structure of photosystem II oxygen-evolving complex (OEC), the ion environment of oxygen evolution and protect the OEC against heat-induced inactivation. The chain is Photosystem II extrinsic protein U from Gloeothece citriformis (strain PCC 7424) (Cyanothece sp. (strain PCC 7424)).